Consider the following 158-residue polypeptide: Transcription elongation factor GreA (158 aa).

It belongs to the GreA/GreB family.

Necessary for efficient RNA polymerase transcription elongation past template-encoded arresting sites. The arresting sites in DNA have the property of trapping a certain fraction of elongating RNA polymerases that pass through, resulting in locked ternary complexes. Cleavage of the nascent transcript by cleavage factors such as GreA or GreB allows the resumption of elongation from the new 3'terminus. GreA releases sequences of 2 to 3 nucleotides. The polypeptide is Transcription elongation factor GreA (Wigglesworthia glossinidia brevipalpis).